The sequence spans 199 residues: Large ribosomal subunit protein uL10 (199 aa).

The protein belongs to the universal ribosomal protein uL10 family. In terms of assembly, part of the ribosomal stalk of the 50S ribosomal subunit. The N-terminus interacts with L11 and the large rRNA to form the base of the stalk. The C-terminus forms an elongated spine to which L12 dimers bind in a sequential fashion forming a multimeric L10(L12)X complex.

Forms part of the ribosomal stalk, playing a central role in the interaction of the ribosome with GTP-bound translation factors. This is Large ribosomal subunit protein uL10 (rplJ) from Aquifex aeolicus (strain VF5).